The sequence spans 279 residues: NAD kinase (279 aa).

The active-site Proton acceptor is Asp-61. Residues Asp-61–Gly-62, Asn-138–Asp-139, Lys-149, Lys-166, Asp-168, and Thr-179–Ser-184 contribute to the NAD(+) site.

It belongs to the NAD kinase family. A divalent metal cation serves as cofactor.

Its subcellular location is the cytoplasm. It carries out the reaction NAD(+) + ATP = ADP + NADP(+) + H(+). In terms of biological role, involved in the regulation of the intracellular balance of NAD and NADP, and is a key enzyme in the biosynthesis of NADP. Catalyzes specifically the phosphorylation on 2'-hydroxyl of the adenosine moiety of NAD to yield NADP. The sequence is that of NAD kinase from Borrelia garinii subsp. bavariensis (strain ATCC BAA-2496 / DSM 23469 / PBi) (Borreliella bavariensis).